Reading from the N-terminus, the 189-residue chain is Histidinol-phosphate aminotransferase (189 aa).

It belongs to the class-II pyridoxal-phosphate-dependent aminotransferase family. Histidinol-phosphate aminotransferase subfamily. As to quaternary structure, homodimer. Pyridoxal 5'-phosphate serves as cofactor.

It catalyses the reaction L-histidinol phosphate + 2-oxoglutarate = 3-(imidazol-4-yl)-2-oxopropyl phosphate + L-glutamate. Its pathway is amino-acid biosynthesis; L-histidine biosynthesis; L-histidine from 5-phospho-alpha-D-ribose 1-diphosphate: step 7/9. In Thiocapsa roseopersicina, this protein is Histidinol-phosphate aminotransferase (hisC).